The following is a 351-amino-acid chain: Lipoyl synthase (351 aa).

Over residues 1 to 10 (MNDSGNSSKV) the composition is skewed to polar residues. The segment at 1-27 (MNDSGNSSKVNVRPPSAGLGAPSPGKR) is disordered. Over residues 14–24 (PPSAGLGAPSP) the composition is skewed to low complexity. [4Fe-4S] cluster-binding residues include Cys-74, Cys-79, Cys-85, Cys-100, Cys-104, Cys-107, and Ser-311. Residues 86 to 300 (WEDREATFLI…KEQAKEIGFS (215 aa)) form the Radical SAM core domain.

Belongs to the radical SAM superfamily. Lipoyl synthase family. Requires [4Fe-4S] cluster as cofactor.

The protein localises to the cytoplasm. The enzyme catalyses [[Fe-S] cluster scaffold protein carrying a second [4Fe-4S](2+) cluster] + N(6)-octanoyl-L-lysyl-[protein] + 2 oxidized [2Fe-2S]-[ferredoxin] + 2 S-adenosyl-L-methionine + 4 H(+) = [[Fe-S] cluster scaffold protein] + N(6)-[(R)-dihydrolipoyl]-L-lysyl-[protein] + 4 Fe(3+) + 2 hydrogen sulfide + 2 5'-deoxyadenosine + 2 L-methionine + 2 reduced [2Fe-2S]-[ferredoxin]. It participates in protein modification; protein lipoylation via endogenous pathway; protein N(6)-(lipoyl)lysine from octanoyl-[acyl-carrier-protein]: step 2/2. Functionally, catalyzes the radical-mediated insertion of two sulfur atoms into the C-6 and C-8 positions of the octanoyl moiety bound to the lipoyl domains of lipoate-dependent enzymes, thereby converting the octanoylated domains into lipoylated derivatives. The sequence is that of Lipoyl synthase from Tropheryma whipplei (strain TW08/27) (Whipple's bacillus).